The primary structure comprises 162 residues: Gas vesicle protein I (162 aa).

The disordered stretch occupies residues 1–162; it reads MTGKQHQKHE…AERQRGGADE (162 aa). Composition is skewed to basic and acidic residues over residues 22 to 37 and 47 to 64; these read INRDKARSKLLRQREK and RQSEVRRGNQSKAQHDTQ. Polar residues-rich tracts occupy residues 65–74 and 81–110; these read SETQRGTQSK and TGGTKNPTAHSTLPPQKTNAENAVRNSHST. Basic and acidic residues-rich tracts occupy residues 122-142 and 151-162; these read ARERLYGLRLHRETTASEDKS and PKAERQRGGADE.

It belongs to the gas vesicle GvpI family. GvpF to GvpM interact with each other in vitro, and may form multi-subunit complex(es). Interacts with GvpC and GvpO.

It localises to the gas vesicle. Functionally, proteins GvpF to GvpM might be involved in nucleating gas vesicle formation. A minor component of the gas vesicle. Gas vesicles are hollow, gas filled proteinaceous nanostructures found in some microorganisms. They allow positioning of halobacteria at the optimal depth for growth in the poorly aerated, shallow brine pools of their habitat. In terms of biological role, expression of a 9.5 kb mc-vac DNA fragment containing 2 divergently transcribed regions (gvpD-gvpE-gvpF-gvpG-gvpH-gvpI-gvpJ-gvpK-gvpL-gvpM and gvpA-gvpC-gvpN-gvpO) allows H.volcanii to produce gas vesicles. The chain is Gas vesicle protein I from Haloferax mediterranei (strain ATCC 33500 / DSM 1411 / JCM 8866 / NBRC 14739 / NCIMB 2177 / R-4) (Halobacterium mediterranei).